A 321-amino-acid chain; its full sequence is tRNA-dihydrouridine synthase B (321 aa).

FMN is bound by residues 16–18 and glutamine 70; that span reads PMA. Cysteine 100 (proton donor) is an active-site residue. FMN is bound by residues lysine 139, 200 to 202, and 224 to 225; these read NGD and GR.

This sequence belongs to the Dus family. DusB subfamily. FMN is required as a cofactor.

It carries out the reaction a 5,6-dihydrouridine in tRNA + NAD(+) = a uridine in tRNA + NADH + H(+). It catalyses the reaction a 5,6-dihydrouridine in tRNA + NADP(+) = a uridine in tRNA + NADPH + H(+). In terms of biological role, catalyzes the synthesis of 5,6-dihydrouridine (D), a modified base found in the D-loop of most tRNAs, via the reduction of the C5-C6 double bond in target uridines. The sequence is that of tRNA-dihydrouridine synthase B from Salmonella typhi.